The sequence spans 503 residues: Probable cytosol aminopeptidase (503 aa).

2 residues coordinate Mn(2+): Lys-272 and Asp-277. Lys-284 is an active-site residue. Residues Asp-295, Asp-354, and Glu-356 each contribute to the Mn(2+) site. Residue Arg-358 is part of the active site.

It belongs to the peptidase M17 family. The cofactor is Mn(2+).

It localises to the cytoplasm. The enzyme catalyses Release of an N-terminal amino acid, Xaa-|-Yaa-, in which Xaa is preferably Leu, but may be other amino acids including Pro although not Arg or Lys, and Yaa may be Pro. Amino acid amides and methyl esters are also readily hydrolyzed, but rates on arylamides are exceedingly low.. It carries out the reaction Release of an N-terminal amino acid, preferentially leucine, but not glutamic or aspartic acids.. Functionally, presumably involved in the processing and regular turnover of intracellular proteins. Catalyzes the removal of unsubstituted N-terminal amino acids from various peptides. In Chlorobium limicola (strain DSM 245 / NBRC 103803 / 6330), this protein is Probable cytosol aminopeptidase.